The primary structure comprises 403 residues: Acetylornithine/succinyldiaminopimelate aminotransferase (403 aa).

Pyridoxal 5'-phosphate is bound by residues 107-108 (GA) and F140. R143 lines the N(2)-acetyl-L-ornithine pocket. Residue 225-228 (DEVQ) participates in pyridoxal 5'-phosphate binding. N6-(pyridoxal phosphate)lysine is present on K254. T282 contacts N(2)-acetyl-L-ornithine. T283 is a pyridoxal 5'-phosphate binding site.

It belongs to the class-III pyridoxal-phosphate-dependent aminotransferase family. ArgD subfamily. In terms of assembly, homodimer. Pyridoxal 5'-phosphate serves as cofactor.

The protein resides in the cytoplasm. It catalyses the reaction N(2)-acetyl-L-ornithine + 2-oxoglutarate = N-acetyl-L-glutamate 5-semialdehyde + L-glutamate. It carries out the reaction N-succinyl-(2S,6S)-2,6-diaminopimelate + 2-oxoglutarate = (S)-2-succinylamino-6-oxoheptanedioate + L-glutamate. The protein operates within amino-acid biosynthesis; L-arginine biosynthesis; N(2)-acetyl-L-ornithine from L-glutamate: step 4/4. It participates in amino-acid biosynthesis; L-lysine biosynthesis via DAP pathway; LL-2,6-diaminopimelate from (S)-tetrahydrodipicolinate (succinylase route): step 2/3. Functionally, involved in both the arginine and lysine biosynthetic pathways. In Photorhabdus laumondii subsp. laumondii (strain DSM 15139 / CIP 105565 / TT01) (Photorhabdus luminescens subsp. laumondii), this protein is Acetylornithine/succinyldiaminopimelate aminotransferase.